A 961-amino-acid chain; its full sequence is Thrombospondin-4 (961 aa).

Positions 1–23 (MLAPRGATFLLLHLALQPWLGAG) are cleaved as a signal peptide. The Laminin G-like domain maps to 24–192 (AQATPQVFDL…LEELKLVVRG (169 aa)). One can recognise an EGF-like 1 domain in the interval 286 to 325 (PVRRCDSNPCFRGVRCTDTRDGFQCGPCPEGYTGNGIVCS). 21 disulfides stabilise this stretch: Cys-290-Cys-301, Cys-295-Cys-310, Cys-313-Cys-324, Cys-330-Cys-341, Cys-335-Cys-350, Cys-353-Cys-377, Cys-383-Cys-394, Cys-388-Cys-403, Cys-406-Cys-418, Cys-424-Cys-438, Cys-432-Cys-448, Cys-450-Cys-461, Cys-477-Cys-482, Cys-487-Cys-507, Cys-523-Cys-543, Cys-546-Cys-566, Cys-582-Cys-602, Cys-605-Cys-625, Cys-643-Cys-663, Cys-683-Cys-703, and Cys-719-Cys-940. One can recognise an EGF-like 2; calcium-binding domain in the interval 326 to 363 (DVDECRYHPCYPGVRCVNLAPGFRCDACPVGFTGPMMQ). The EGF-like 3; calcium-binding domain occupies 379–419 (DIDECRNGACVLNSICINTLGSYRCGPCKPGYIGDQMRGCK). The region spanning 420 to 462 (MERNCRDPELNPCSVNAQCIEERQGDVTCVCGVGWAGDGYICG) is the EGF-like 4 domain. 8 TSP type-3 repeats span residues 463–495 (KDVD…NSGQ), 496–531 (EDAD…NVDQ), 532–554 (RNSD…NNDQ), 555–590 (KDTD…NSDQ), 591–613 (EDRD…NPNQ), 614–651 (SDVD…NSAQ), 652–691 (LDTD…NPAQ), and 692–727 (EDSN…EVTL). A Cell attachment site motif is present at residues 562-564 (KGD). Residues 581 to 671 (NCQKVPNSDQ…ECDDDDDNDG (91 aa)) form a disordered region. Residue Asn-612 is glycosylated (N-linked (GlcNAc...) asparagine). A compositionally biased stretch (polar residues) spans 640–652 (TDNCPTVINSAQL). The segment covering 660–671 (GDECDDDDDNDG) has biased composition (acidic residues). One can recognise a TSP C-terminal domain in the interval 731–945 (RAYQTVVLDP…LKYRCNDTIP (215 aa)). A glycan (N-linked (GlcNAc...) asparagine) is linked at Asn-941.

This sequence belongs to the thrombospondin family. In terms of assembly, homopentamer; disulfide-linked. Interacts with PTBP3. Interacts (via EGF-like 3; calcium-binding domain) with ATF6 and facilitates its processing, activation and nuclear translocation. Interacts with NOTCH1.

It localises to the endoplasmic reticulum. The protein localises to the sarcoplasmic reticulum. The protein resides in the secreted. It is found in the extracellular space. Its subcellular location is the extracellular matrix. In terms of biological role, adhesive glycoprotein that mediates cell-to-cell and cell-to-matrix interactions and is involved in various processes including cellular proliferation, migration, adhesion and attachment, inflammatory response to CNS injury, regulation of vascular inflammation and adaptive responses of the heart to pressure overload and in myocardial function and remodeling. Binds to structural extracellular matrix (ECM) proteins and modulates the ECM in response to tissue damage, contributing to cardioprotective and adaptive ECM remodeling. Plays a role in ER stress response, via its interaction with the activating transcription factor 6 alpha (ATF6) which produces adaptive ER stress response factors and protects myocardium from pressure overload. May contribute to spinal presynaptic hypersensitivity and neuropathic pain states after peripheral nerve injury. May play a role in regulating protective astrogenesis from the subventricular zone (SVZ) niche after injury in a NOTCH1-dependent manner. In Bos taurus (Bovine), this protein is Thrombospondin-4 (THBS4).